A 464-amino-acid chain; its full sequence is MDVAGKKVAVLGARRSGMAVAELLSLKGASVFVSELGTIGAHESARLQALRIPFEEGGHSDNVLCTDFCVISPGIPGRAPVVRAMLEKGIPLFSEIEVAYWFCKARIIGITGTDGKTTTATLVHRIFETDGMTHRYRAFSVGNIGQPFSSRVLTMRPEDVAVIELSSYQLEGCCTFRPDVSVITNITPDHLDRYEGELHNYAQTKYRIYAHQGKEDTLVYNDDDPLLHDHFASNRETLPCRIVPFGIGCKPEHAGFAAAVRFCDHRIVFDAGAKSENIIEAEDFLKRSFRGRHNIANALAAVAAARALGIGNEAIRSALQGFSGVEHRQEFVRTLDGSDWINDSKATNINALSQALETVPGRMVLIAGGRDKGSDYREIAGIVRKKVAALVAIGEAREKLCAAYGGMVDVRSANSLEEAVSLARALVEPGQTVLFSPGCSSFDMFEDFEDRGRQFKKLTTDLRS.

112 to 118 serves as a coordination point for ATP; that stretch reads GTDGKTT.

It belongs to the MurCDEF family.

It is found in the cytoplasm. The enzyme catalyses UDP-N-acetyl-alpha-D-muramoyl-L-alanine + D-glutamate + ATP = UDP-N-acetyl-alpha-D-muramoyl-L-alanyl-D-glutamate + ADP + phosphate + H(+). It participates in cell wall biogenesis; peptidoglycan biosynthesis. Functionally, cell wall formation. Catalyzes the addition of glutamate to the nucleotide precursor UDP-N-acetylmuramoyl-L-alanine (UMA). This is UDP-N-acetylmuramoylalanine--D-glutamate ligase from Chlorobium phaeobacteroides (strain DSM 266 / SMG 266 / 2430).